The chain runs to 255 residues: 1-(5-phosphoribosyl)-5-[(5-phosphoribosylamino)methylideneamino] imidazole-4-carboxamide isomerase (255 aa).

The Proton acceptor role is filled by aspartate 8. The active-site Proton donor is aspartate 129.

It belongs to the HisA/HisF family.

The protein localises to the cytoplasm. It carries out the reaction 1-(5-phospho-beta-D-ribosyl)-5-[(5-phospho-beta-D-ribosylamino)methylideneamino]imidazole-4-carboxamide = 5-[(5-phospho-1-deoxy-D-ribulos-1-ylimino)methylamino]-1-(5-phospho-beta-D-ribosyl)imidazole-4-carboxamide. It participates in amino-acid biosynthesis; L-histidine biosynthesis; L-histidine from 5-phospho-alpha-D-ribose 1-diphosphate: step 4/9. In Prochlorococcus marinus (strain MIT 9515), this protein is 1-(5-phosphoribosyl)-5-[(5-phosphoribosylamino)methylideneamino] imidazole-4-carboxamide isomerase.